Here is a 729-residue protein sequence, read N- to C-terminus: Fatty acid oxidation complex subunit alpha (729 aa).

Residues 1-189 are enoyl-CoA hydratase/isomerase; the sequence is MLYKGDTLYL…KVGLVDAVVK (189 aa). Asp-296 is a binding site for substrate. Residues 311–729 are 3-hydroxyacyl-CoA dehydrogenase; sequence ETPKQAAVLG…AQPVGELQTA (419 aa). NAD(+)-binding positions include Met-324, Asp-343, 400–402, Lys-407, and Ser-429; that span reads VVE. The For 3-hydroxyacyl-CoA dehydrogenase activity role is filled by His-450. NAD(+) is bound at residue Asn-453. 2 residues coordinate substrate: Asn-500 and Tyr-660. Positions 708-729 are disordered; it reads SHNAPYYPQVEPAQPVGELQTA.

It in the N-terminal section; belongs to the enoyl-CoA hydratase/isomerase family. This sequence in the C-terminal section; belongs to the 3-hydroxyacyl-CoA dehydrogenase family. In terms of assembly, heterotetramer of two alpha chains (FadB) and two beta chains (FadA).

The catalysed reaction is a (3S)-3-hydroxyacyl-CoA + NAD(+) = a 3-oxoacyl-CoA + NADH + H(+). It catalyses the reaction a (3S)-3-hydroxyacyl-CoA = a (2E)-enoyl-CoA + H2O. It carries out the reaction a 4-saturated-(3S)-3-hydroxyacyl-CoA = a (3E)-enoyl-CoA + H2O. The enzyme catalyses (3S)-3-hydroxybutanoyl-CoA = (3R)-3-hydroxybutanoyl-CoA. The catalysed reaction is a (3Z)-enoyl-CoA = a 4-saturated (2E)-enoyl-CoA. It catalyses the reaction a (3E)-enoyl-CoA = a 4-saturated (2E)-enoyl-CoA. The protein operates within lipid metabolism; fatty acid beta-oxidation. Involved in the aerobic and anaerobic degradation of long-chain fatty acids via beta-oxidation cycle. Catalyzes the formation of 3-oxoacyl-CoA from enoyl-CoA via L-3-hydroxyacyl-CoA. It can also use D-3-hydroxyacyl-CoA and cis-3-enoyl-CoA as substrate. This chain is Fatty acid oxidation complex subunit alpha, found in Cronobacter sakazakii (strain ATCC BAA-894) (Enterobacter sakazakii).